We begin with the raw amino-acid sequence, 484 residues long: Notoamide biosynthesis transcriptional activator notL (484 aa).

A DNA-binding region (zn(2)-C6 fungal-type) is located at residues 33 to 60; that stretch reads CQSCATSKIKCPKEKTSCSKCQARGIEC. Disordered stretches follow at residues 70–154 and 363–387; these read RRRE…NNSV and GGGESDTGQRPATSMIPNGKDQMRP. The segment covering 76 to 122 has biased composition (low complexity); it reads TGHPTSCTSTSTTANSSSSSSRSSNSSSSSSTSPPSSSSSLSSNPEP. Residues 123 to 133 are compositionally biased toward basic and acidic residues; sequence TSDKDLPRPRS. Composition is skewed to polar residues over residues 139 to 154 and 368 to 378; these read ANSTEPSILPPANNSV and DTGQRPATSMI.

The protein resides in the nucleus. In terms of biological role, transcription factor that probably regulates the expression of the gene cluster that mediates the biosynthesis of notoamide, a fungal indole alkaloid that belongs to a family of natural products containing a characteristic bicyclo[2.2.2]diazaoctane core. The chain is Notoamide biosynthesis transcriptional activator notL from Aspergillus sp. (strain MF297-2).